We begin with the raw amino-acid sequence, 110 residues long: UPF0060 membrane protein Mfla_2554 (110 aa).

The next 4 membrane-spanning stretches (helical) occupy residues 7 to 27 (VALF…PYLW), 33 to 53 (SPLL…LLTL), 61 to 81 (VYAA…WVVD), and 83 to 103 (IIPS…MAII).

This sequence belongs to the UPF0060 family.

Its subcellular location is the cell inner membrane. This is UPF0060 membrane protein Mfla_2554 from Methylobacillus flagellatus (strain ATCC 51484 / DSM 6875 / VKM B-1610 / KT).